A 466-amino-acid chain; its full sequence is Citrate synthase, mitochondrial (466 aa).

Residues 1–27 (MALLTAAARLLGAKNSSCLVLAARHAS) constitute a mitochondrion transit peptide. The short motif at 2–21 (ALLTAAARLLGAKNSSCLVL) is the SIFI-degron element. Lysine 57 is subject to N6-succinyllysine. Lysine 76 is modified (N6-acetyllysine; alternate). Lysine 76 bears the N6-succinyllysine; alternate mark. N6-succinyllysine is present on residues lysine 103 and lysine 193. Serine 226 bears the Phosphoserine mark. Histidine 301 is a catalytic residue. Lysine 321 and lysine 327 each carry N6-acetyllysine; alternate. Lysine 321 and lysine 327 each carry N6-succinyllysine; alternate. The active site involves histidine 347. Arginine 356 lines the oxaloacetate pocket. Lysine 375 is subject to N6-acetyllysine; alternate. Lysine 375 bears the N6-succinyllysine; alternate mark. N6-acetyllysine is present on lysine 382. Residue lysine 393 is modified to N6-acetyllysine; alternate. An N6-succinyllysine; alternate modification is found at lysine 393. An N6,N6,N6-trimethyllysine modification is found at lysine 395. Residue aspartate 402 is part of the active site. Oxaloacetate-binding residues include arginine 428 and arginine 448. Lysine 450 carries the N6-succinyllysine modification. Position 459 is an N6-acetyllysine; alternate (lysine 459). N6-succinyllysine; alternate is present on lysine 459.

Belongs to the citrate synthase family. In terms of assembly, homodimer. Post-translationally, methylated. Trimethylation at Lys-395 by CSKMT decreases citrate synthase activity. In response to mitochondrial stress, the precursor protein is ubiquitinated by the SIFI complex in the cytoplasm before mitochondrial import, leading to its degradation. Within the SIFI complex, UBR4 initiates ubiquitin chain that are further elongated or branched by KCMF1. As to expression, expressed in the head region and flagellum of epididymal sperm.

It localises to the mitochondrion matrix. It catalyses the reaction oxaloacetate + acetyl-CoA + H2O = citrate + CoA + H(+). The protein operates within carbohydrate metabolism; tricarboxylic acid cycle; isocitrate from oxaloacetate: step 1/2. Functionally, key enzyme of the Krebs tricarboxylic acid cycle which catalyzes the synthesis of citrate from acetyl coenzyme A and oxaloacetate. The polypeptide is Citrate synthase, mitochondrial (Cs) (Rattus norvegicus (Rat)).